We begin with the raw amino-acid sequence, 331 residues long: L-lactate dehydrogenase A chain (331 aa).

NAD(+) contacts are provided by residues 29 to 57 (GMVGMASAISILLKDLCDELAMVDVMEDK) and Arg98. The substrate site is built by Arg105, Asn137, and Arg168. Residue Asn137 participates in NAD(+) binding. Catalysis depends on His192, which acts as the Proton acceptor. Thr247 is a binding site for substrate.

This sequence belongs to the LDH/MDH superfamily. LDH family. As to quaternary structure, homotetramer.

It is found in the cytoplasm. The catalysed reaction is (S)-lactate + NAD(+) = pyruvate + NADH + H(+). Its pathway is fermentation; pyruvate fermentation to lactate; (S)-lactate from pyruvate: step 1/1. In terms of biological role, interconverts simultaneously and stereospecifically pyruvate and lactate with concomitant interconversion of NADH and NAD(+). This chain is L-lactate dehydrogenase A chain (ldha), found in Parachaenichthys charcoti (Charcot's dragonfish).